The primary structure comprises 617 residues: Dihydroxy-acid dehydratase (617 aa).

D81 is a Mg(2+) binding site. C122 lines the [2Fe-2S] cluster pocket. The Mg(2+) site is built by D123 and K124. Residue K124 is modified to N6-carboxylysine. C195 serves as a coordination point for [2Fe-2S] cluster. A Mg(2+)-binding site is contributed by E491. Catalysis depends on S517, which acts as the Proton acceptor.

It belongs to the IlvD/Edd family. In terms of assembly, homodimer. [2Fe-2S] cluster serves as cofactor. Mg(2+) is required as a cofactor.

The catalysed reaction is (2R)-2,3-dihydroxy-3-methylbutanoate = 3-methyl-2-oxobutanoate + H2O. It carries out the reaction (2R,3R)-2,3-dihydroxy-3-methylpentanoate = (S)-3-methyl-2-oxopentanoate + H2O. The protein operates within amino-acid biosynthesis; L-isoleucine biosynthesis; L-isoleucine from 2-oxobutanoate: step 3/4. It functions in the pathway amino-acid biosynthesis; L-valine biosynthesis; L-valine from pyruvate: step 3/4. Functionally, functions in the biosynthesis of branched-chain amino acids. Catalyzes the dehydration of (2R,3R)-2,3-dihydroxy-3-methylpentanoate (2,3-dihydroxy-3-methylvalerate) into 2-oxo-3-methylpentanoate (2-oxo-3-methylvalerate) and of (2R)-2,3-dihydroxy-3-methylbutanoate (2,3-dihydroxyisovalerate) into 2-oxo-3-methylbutanoate (2-oxoisovalerate), the penultimate precursor to L-isoleucine and L-valine, respectively. In Caulobacter vibrioides (strain ATCC 19089 / CIP 103742 / CB 15) (Caulobacter crescentus), this protein is Dihydroxy-acid dehydratase.